The following is an 877-amino-acid chain: DNA mismatch repair protein MutS (877 aa).

Residue 630–637 (GPNMAGKS) participates in ATP binding.

This sequence belongs to the DNA mismatch repair MutS family.

This protein is involved in the repair of mismatches in DNA. It is possible that it carries out the mismatch recognition step. This protein has a weak ATPase activity. In Jannaschia sp. (strain CCS1), this protein is DNA mismatch repair protein MutS.